Here is a 97-residue protein sequence, read N- to C-terminus: Insertion element IS2 uncharacterized 11.1 kDa protein (97 aa).

This Escherichia coli protein is Insertion element IS2 uncharacterized 11.1 kDa protein.